The chain runs to 34 residues: Omega-ctenitoxin-Pn2a (34 aa).

3 disulfides stabilise this stretch: Cys2–Cys16, Cys9–Cys26, and Cys15–Cys28.

This sequence belongs to the neurotoxin 02 (plectoxin) family. 01 (Tx3) subfamily. In terms of tissue distribution, expressed by the venom gland.

The protein resides in the secreted. Its function is as follows. Inhibits all known high-voltage activated calcium channels (L-, P/Q- and R-type currents) (Cav), and most effectively the P/Q- (Cav2.1/CACNA1A) and R-type (Cav2.3/CACNA1E) currents. In rat brain, inhibits glutamate release, neuronal death and loss of neurotransmission in the hippocampus resulting from ischemia. In vivo, induces rapid general flaccid paralysis followed by death in 10-30 minutes at dose levels of 5 ug per mouse. The polypeptide is Omega-ctenitoxin-Pn2a (Phoneutria nigriventer (Brazilian armed spider)).